The following is a 502-amino-acid chain: Type II methyltransferase M.HincII (502 aa).

This sequence belongs to the N(4)/N(6)-methyltransferase family.

It catalyses the reaction a 2'-deoxyadenosine in DNA + S-adenosyl-L-methionine = an N(6)-methyl-2'-deoxyadenosine in DNA + S-adenosyl-L-homocysteine + H(+). Its function is as follows. A gamma subtype methylase that recognizes the double-stranded sequence 5'-GTYRAC-3', methylates A-5 on both strands, and protects the DNA from cleavage by the HincII endonuclease. The protein is Type II methyltransferase M.HincII of Haemophilus influenzae.